Here is a 244-residue protein sequence, read N- to C-terminus: 5-oxoprolinase subunit A (244 aa).

The protein belongs to the LamB/PxpA family. As to quaternary structure, forms a complex composed of PxpA, PxpB and PxpC.

It carries out the reaction 5-oxo-L-proline + ATP + 2 H2O = L-glutamate + ADP + phosphate + H(+). In terms of biological role, catalyzes the cleavage of 5-oxoproline to form L-glutamate coupled to the hydrolysis of ATP to ADP and inorganic phosphate. The polypeptide is 5-oxoprolinase subunit A (Salmonella choleraesuis (strain SC-B67)).